Consider the following 144-residue polypeptide: MPPKKKKLAAIIKLQISAGQANPAPPVGPALGQHGVNIMEFCKAYNAATESQRGDVVPVEISVFEDRSFDFKLKTPPAAKLLLKAAGVQKGSGEPHKTKVGKVSMDQIREIAQTKMVDLNANDLDQASKIIAGTARSMGLTVEG.

This sequence belongs to the universal ribosomal protein uL11 family. In terms of assembly, part of the ribosomal stalk of the 50S ribosomal subunit. Interacts with L10 and the large rRNA to form the base of the stalk. L10 forms an elongated spine to which L12 dimers bind in a sequential fashion forming a multimeric L10(L12)X complex. In terms of processing, one or more lysine residues are methylated.

In terms of biological role, forms part of the ribosomal stalk which helps the ribosome interact with GTP-bound translation factors. This is Large ribosomal subunit protein uL11 from Saccharopolyspora erythraea (strain ATCC 11635 / DSM 40517 / JCM 4748 / NBRC 13426 / NCIMB 8594 / NRRL 2338).